The primary structure comprises 108 residues: UPF0060 membrane protein Spro_2289 (108 aa).

Helical transmembrane passes span 6-26 (LLFFATALAEIIGCFLPYLWL), 31-51 (SAWLLLPAAASLMLFVWLLTL), 61-81 (AAYGGVYVATALLWLRVVDGV), and 85-105 (ALDWLGAGVALAGMLIIVSGW).

It belongs to the UPF0060 family.

It localises to the cell inner membrane. This Serratia proteamaculans (strain 568) protein is UPF0060 membrane protein Spro_2289.